Consider the following 378-residue polypeptide: Probable S-(hydroxymethyl)glutathione dehydrogenase 1 (378 aa).

A Zn(2+)-binding site is contributed by Cys-47. An NAD(+)-binding site is contributed by His-48. Residues His-69, Glu-70, Cys-99, Cys-102, Cys-105, Cys-113, and Cys-176 each contribute to the Zn(2+) site. Residues 201–206 (GCGCVG), Asp-225, 293–295 (IGV), and 318–320 (SAF) each bind NAD(+).

Belongs to the zinc-containing alcohol dehydrogenase family. Class-III subfamily. It depends on Zn(2+) as a cofactor.

The enzyme catalyses a primary alcohol + NAD(+) = an aldehyde + NADH + H(+). The catalysed reaction is a secondary alcohol + NAD(+) = a ketone + NADH + H(+). It carries out the reaction S-(hydroxymethyl)glutathione + NADP(+) = S-formylglutathione + NADPH + H(+). It catalyses the reaction S-(hydroxymethyl)glutathione + NAD(+) = S-formylglutathione + NADH + H(+). The enzyme catalyses S-nitrosoglutathione + NADH + H(+) = S-(hydroxysulfenamide)glutathione + NAD(+). In terms of biological role, oxidizes long-chain alcohols and, in the presence of glutathione, is able to oxidize formaldehyde. Also acts as a S-nitroso-glutathione reductase by catalyzing the NADH-dependent reduction of S-nitrosoglutathione, thereby regulating protein S-nitrosylation. In Schizosaccharomyces pombe (strain 972 / ATCC 24843) (Fission yeast), this protein is Probable S-(hydroxymethyl)glutathione dehydrogenase 1.